The following is a 210-amino-acid chain: Imidazole glycerol phosphate synthase subunit HisH (210 aa).

Residues 3–210 (KVALLDYGSG…QLLRNWIDLL (208 aa)) form the Glutamine amidotransferase type-1 domain. Residue Cys-81 is the Nucleophile of the active site. Active-site residues include His-191 and Glu-193.

Heterodimer of HisH and HisF.

The protein localises to the cytoplasm. The enzyme catalyses 5-[(5-phospho-1-deoxy-D-ribulos-1-ylimino)methylamino]-1-(5-phospho-beta-D-ribosyl)imidazole-4-carboxamide + L-glutamine = D-erythro-1-(imidazol-4-yl)glycerol 3-phosphate + 5-amino-1-(5-phospho-beta-D-ribosyl)imidazole-4-carboxamide + L-glutamate + H(+). The catalysed reaction is L-glutamine + H2O = L-glutamate + NH4(+). The protein operates within amino-acid biosynthesis; L-histidine biosynthesis; L-histidine from 5-phospho-alpha-D-ribose 1-diphosphate: step 5/9. Its function is as follows. IGPS catalyzes the conversion of PRFAR and glutamine to IGP, AICAR and glutamate. The HisH subunit catalyzes the hydrolysis of glutamine to glutamate and ammonia as part of the synthesis of IGP and AICAR. The resulting ammonia molecule is channeled to the active site of HisF. In Corynebacterium diphtheriae (strain ATCC 700971 / NCTC 13129 / Biotype gravis), this protein is Imidazole glycerol phosphate synthase subunit HisH.